The primary structure comprises 210 residues: Amelogenin, X isoform (210 aa).

The signal sequence occupies residues Met-1 to Ala-16. A Phosphoserine modification is found at Ser-32. Low complexity-rich tracts occupy residues Val-109 to Pro-119 and Pro-136 to Gln-169. Positions Val-109 to Ser-187 are disordered. Residues Pro-170–Pro-179 are compositionally biased toward pro residues.

Belongs to the amelogenin family. Interacts with KRT5. Several forms are produced by C-terminal processing. In terms of processing, phosphorylated by FAM20C in vitro.

Its subcellular location is the secreted. The protein localises to the extracellular space. It is found in the extracellular matrix. Functionally, plays a role in the biomineralization of teeth. Seems to regulate the formation of crystallites during the secretory stage of tooth enamel development. Thought to play a major role in the structural organization and mineralization of developing enamel. This chain is Amelogenin, X isoform (Amelx), found in Mus musculus (Mouse).